We begin with the raw amino-acid sequence, 286 residues long: Bifunctional protein FolD (286 aa).

NADP(+)-binding positions include 165-167 (GRS), S190, and V231.

This sequence belongs to the tetrahydrofolate dehydrogenase/cyclohydrolase family. In terms of assembly, homodimer.

The enzyme catalyses (6R)-5,10-methylene-5,6,7,8-tetrahydrofolate + NADP(+) = (6R)-5,10-methenyltetrahydrofolate + NADPH. It catalyses the reaction (6R)-5,10-methenyltetrahydrofolate + H2O = (6R)-10-formyltetrahydrofolate + H(+). It functions in the pathway one-carbon metabolism; tetrahydrofolate interconversion. Functionally, catalyzes the oxidation of 5,10-methylenetetrahydrofolate to 5,10-methenyltetrahydrofolate and then the hydrolysis of 5,10-methenyltetrahydrofolate to 10-formyltetrahydrofolate. The chain is Bifunctional protein FolD from Bacillus cereus (strain B4264).